Here is a 354-residue protein sequence, read N- to C-terminus: Rhodopsin (354 aa).

Residues 1-36 (MNGTEGPAFYVPMSNATGVVRSPYEYPQYYLVAPWA) are Extracellular-facing. N-linked (GlcNAc...) asparagine glycans are attached at residues asparagine 2 and asparagine 15. The helical transmembrane segment at 37–61 (YGLLAAYMFFLIITGFPVNFLTLYV) threads the bilayer. Residues 62–73 (TIEHKKLRTPLN) lie on the Cytoplasmic side of the membrane. A helical membrane pass occupies residues 74 to 96 (YILLNLAIADLFMVFGGFTTTMY). Topologically, residues 97-110 (TSLHGYFVFGRLGC) are extracellular. A disulfide bridge links cysteine 110 with cysteine 187. A helical membrane pass occupies residues 111–133 (NLEGFFATLGGEMGLWSLVVLAI). The 'Ionic lock' involved in activated form stabilization signature appears at 134–136 (ERW). Topologically, residues 134-152 (ERWMVVCKPVSNFRFGENH) are cytoplasmic. A helical transmembrane segment spans residues 153–173 (AIMGVAFTWVMACSCAVPPLV). At 174–202 (GWSRYIPEGMQCSCGVDYYTRTPGVNNES) the chain is on the extracellular side. Asparagine 200 carries an N-linked (GlcNAc...) asparagine glycan. The chain crosses the membrane as a helical span at residues 203-224 (FVIYMFIVHFFIPLIVIFFCYG). Residues 225 to 252 (RLVCTVKEAAAQQQESETTQRAEREVTR) are Cytoplasmic-facing. A helical transmembrane segment spans residues 253–274 (MVIIMVIAFLICWLPYAGVAWY). Topologically, residues 275–286 (IFTHQGSEFGPV) are extracellular. Residues 287–308 (FMTLPAFFAKTSAVYNPCIYIC) form a helical membrane-spanning segment. Lysine 296 is modified (N6-(retinylidene)lysine). The Cytoplasmic portion of the chain corresponds to 309–354 (MNKQFRHCMITTLCCGKNPFEEEEGASTTASKTEASSVSSSSVSPA). Positions 333-354 (GASTTASKTEASSVSSSSVSPA) are disordered. Positions 334-354 (ASTTASKTEASSVSSSSVSPA) are enriched in low complexity.

Belongs to the G-protein coupled receptor 1 family. Opsin subfamily. Phosphorylated on some or all of the serine and threonine residues present in the C-terminal region. Post-translationally, contains one covalently linked retinal chromophore. Retinal rod photoreceptor cells, predominantly in the outer segments (at protein level). Retinal rod photoreceptor cells.

Its subcellular location is the membrane. The protein resides in the cell projection. It localises to the cilium. It is found in the photoreceptor outer segment. Its function is as follows. Photoreceptor required for image-forming vision at low light intensity. While most salt water fish species use retinal as chromophore, most freshwater fish use 3-dehydroretinal, or a mixture of retinal and 3-dehydroretinal. Light-induced isomerization of 11-cis to all-trans retinal triggers a conformational change that activates signaling via G-proteins. Subsequent receptor phosphorylation mediates displacement of the bound G-protein alpha subunit by arrestin and terminates signaling. This chain is Rhodopsin (rho), found in Danio rerio (Zebrafish).